A 704-amino-acid chain; its full sequence is Penicillin-binding protein H (704 aa).

The chain crosses the membrane as a helical span at residues 23 to 43 (FFLAVFVLFTALIFKLGVVQI). Residues 197 to 223 (MNPNKSNSNGKNGALLDEKKNSSQRPK) are disordered. Residues 200–209 (NKSNSNGKNG) show a composition bias toward low complexity. The span at 212–223 (LDEKKNSSQRPK) shows a compositional bias: basic and acidic residues. S415 serves as the catalytic Acyl-ester intermediate.

Belongs to the transpeptidase family.

It is found in the cell membrane. It catalyses the reaction Preferential cleavage: (Ac)2-L-Lys-D-Ala-|-D-Ala. Also transpeptidation of peptidyl-alanyl moieties that are N-acyl substituents of D-alanine.. It functions in the pathway cell wall biogenesis; peptidoglycan biosynthesis. Involved in the polymerization of peptidoglycan. Plays a redundant role with PBP-2A (pbpA) in determining the rod shape of the cell during vegetative growth and spore outgrowth. The protein is Penicillin-binding protein H of Bacillus subtilis (strain 168).